Consider the following 112-residue polypeptide: uncharacterized protein (112 aa).

2 positions are modified to phosphoserine: serine 51 and serine 53. The helical transmembrane segment at 90–110 threads the bilayer; that stretch reads FIFTLSMFLIAFILLIAFVSF.

The protein resides in the golgi apparatus membrane. It localises to the endoplasmic reticulum membrane. This is an uncharacterized protein from Schizosaccharomyces pombe (strain 972 / ATCC 24843) (Fission yeast).